We begin with the raw amino-acid sequence, 468 residues long: Phosphoglucosamine mutase (468 aa).

Ser-112 (phosphoserine intermediate) is an active-site residue. Residues Ser-112, Asp-254, Asp-256, and Asp-258 each coordinate Mg(2+). Position 112 is a phosphoserine (Ser-112).

It belongs to the phosphohexose mutase family. The cofactor is Mg(2+). Activated by phosphorylation.

It catalyses the reaction alpha-D-glucosamine 1-phosphate = D-glucosamine 6-phosphate. Catalyzes the conversion of glucosamine-6-phosphate to glucosamine-1-phosphate. The chain is Phosphoglucosamine mutase from Prochlorococcus marinus (strain MIT 9303).